A 176-amino-acid chain; its full sequence is NAD(P)H-quinone oxidoreductase subunit 6, chloroplastic (176 aa).

5 helical membrane passes run 10 to 30 (FLLV…VLLP), 33 to 53 (IYSA…YILL), 61 to 81 (AQLL…VMFM), 92 to 112 (LWTI…ISLI), and 152 to 172 (FFLP…GAIA).

This sequence belongs to the complex I subunit 6 family. As to quaternary structure, NDH is composed of at least 16 different subunits, 5 of which are encoded in the nucleus.

The protein resides in the plastid. It localises to the chloroplast thylakoid membrane. The enzyme catalyses a plastoquinone + NADH + (n+1) H(+)(in) = a plastoquinol + NAD(+) + n H(+)(out). It carries out the reaction a plastoquinone + NADPH + (n+1) H(+)(in) = a plastoquinol + NADP(+) + n H(+)(out). NDH shuttles electrons from NAD(P)H:plastoquinone, via FMN and iron-sulfur (Fe-S) centers, to quinones in the photosynthetic chain and possibly in a chloroplast respiratory chain. The immediate electron acceptor for the enzyme in this species is believed to be plastoquinone. Couples the redox reaction to proton translocation, and thus conserves the redox energy in a proton gradient. This Coffea arabica (Arabian coffee) protein is NAD(P)H-quinone oxidoreductase subunit 6, chloroplastic (ndhG).